Consider the following 172-residue polypeptide: Xanthine-guanine phosphoribosyltransferase (172 aa).

Residues 47 to 48 (RG) and 106 to 114 (DDLVDTGKT) each bind 5-phospho-alpha-D-ribose 1-diphosphate. Residue aspartate 107 coordinates Mg(2+). Guanine contacts are provided by aspartate 110 and isoleucine 153. Residues aspartate 110 and isoleucine 153 each contribute to the xanthine site. Residues 110–114 (DTGKT) and 152–153 (WI) each bind GMP.

The protein belongs to the purine/pyrimidine phosphoribosyltransferase family. XGPT subfamily. As to quaternary structure, homotetramer. Mg(2+) serves as cofactor.

Its subcellular location is the cell inner membrane. The enzyme catalyses GMP + diphosphate = guanine + 5-phospho-alpha-D-ribose 1-diphosphate. It carries out the reaction XMP + diphosphate = xanthine + 5-phospho-alpha-D-ribose 1-diphosphate. The catalysed reaction is IMP + diphosphate = hypoxanthine + 5-phospho-alpha-D-ribose 1-diphosphate. The protein operates within purine metabolism; GMP biosynthesis via salvage pathway; GMP from guanine: step 1/1. It functions in the pathway purine metabolism; XMP biosynthesis via salvage pathway; XMP from xanthine: step 1/1. Its function is as follows. Purine salvage pathway enzyme that catalyzes the transfer of the ribosyl-5-phosphate group from 5-phospho-alpha-D-ribose 1-diphosphate (PRPP) to the N9 position of the 6-oxopurines guanine and xanthine to form the corresponding ribonucleotides GMP (guanosine 5'-monophosphate) and XMP (xanthosine 5'-monophosphate), with the release of PPi. To a lesser extent, also acts on hypoxanthine. This Rhodopseudomonas palustris (strain HaA2) protein is Xanthine-guanine phosphoribosyltransferase.